A 337-amino-acid polypeptide reads, in one-letter code: DNA-directed RNA polymerase subunit alpha (337 aa).

Residues 1 to 233 are alpha N-terminal domain (alpha-NTD); sequence MVREKVTVST…DLFIPFLHAQ (233 aa). Residues 267–337 are alpha C-terminal domain (alpha-CTD); sequence IALKYIFIDQ…FTVDLPKNKF (71 aa).

Belongs to the RNA polymerase alpha chain family. In plastids the minimal PEP RNA polymerase catalytic core is composed of four subunits: alpha, beta, beta', and beta''. When a (nuclear-encoded) sigma factor is associated with the core the holoenzyme is formed, which can initiate transcription.

It localises to the plastid. The protein localises to the chloroplast. It catalyses the reaction RNA(n) + a ribonucleoside 5'-triphosphate = RNA(n+1) + diphosphate. DNA-dependent RNA polymerase catalyzes the transcription of DNA into RNA using the four ribonucleoside triphosphates as substrates. The polypeptide is DNA-directed RNA polymerase subunit alpha (Platanus occidentalis (Sycamore)).